Consider the following 484-residue polypeptide: MNIKDIKKINFFISEKKNKNIHLIGIGGAGMMGIALILLKLGYKVSGSDLLESLMIKKLINLGATIYLQHSEKNIKNVDFIIKSSAISSNNKEILAAKKRNIPILLRAEMIEILMSFKKGIAVSGTHGKTTTTSMIADIFIDSGLDPTVINGGLIKSINSYAKLGSSSYFITEADESDASFLYLNPNIIIVTNIEPDHIDHYDNSFKKLKQTFLIFLKKITLYGTAIVCIDNNAICDILTNLKCKIITYGFNKNADVRIFLYKQNNFIGHFYIILKNNKKLNIILNIPGKHNALNAAAAIALAIHEGINNDLMIASLKNFQGTCRRFEFLGFLSIDQGFDKRANCMLIDDYGHHPTELSETIKTIRISWPNKNLIMIFQPHRYTRTYNLYHDFVQTLSQVDVLLILHVYSANEKFIVGADSLSLFNDIKKLGKNYVTLISNHNMILDTLIQTLQGNDIILIQGAGNIDTIAHKILIKKTKKVIK.

125–131 is an ATP binding site; it reads GTHGKTT.

This sequence belongs to the MurCDEF family.

Its subcellular location is the cytoplasm. It carries out the reaction UDP-N-acetyl-alpha-D-muramate + L-alanine + ATP = UDP-N-acetyl-alpha-D-muramoyl-L-alanine + ADP + phosphate + H(+). The protein operates within cell wall biogenesis; peptidoglycan biosynthesis. Functionally, cell wall formation. The chain is UDP-N-acetylmuramate--L-alanine ligase from Buchnera aphidicola subsp. Acyrthosiphon pisum (strain 5A).